Reading from the N-terminus, the 305-residue chain is Ornithine carbamoyltransferase (305 aa).

Residues 52 to 55 (STRT), glutamine 79, arginine 103, and 130 to 133 (HPCQ) contribute to the carbamoyl phosphate site. L-ornithine is bound by residues asparagine 161, aspartate 221, and 225-226 (SM). Carbamoyl phosphate contacts are provided by residues 261 to 262 (CL) and arginine 289.

Belongs to the aspartate/ornithine carbamoyltransferase superfamily. OTCase family.

The protein localises to the cytoplasm. It carries out the reaction carbamoyl phosphate + L-ornithine = L-citrulline + phosphate + H(+). Its pathway is amino-acid biosynthesis; L-arginine biosynthesis; L-arginine from L-ornithine and carbamoyl phosphate: step 1/3. Its function is as follows. Reversibly catalyzes the transfer of the carbamoyl group from carbamoyl phosphate (CP) to the N(epsilon) atom of ornithine (ORN) to produce L-citrulline. In Methanocorpusculum labreanum (strain ATCC 43576 / DSM 4855 / Z), this protein is Ornithine carbamoyltransferase.